The sequence spans 321 residues: Protein APA1 (321 aa).

The segment at 50-70 (SLIEKPERGQTPEGEDPLGKP) is disordered. Residue Lys54 participates in substrate binding. The residue at position 60 (Thr60) is a Phosphothreonine. Substrate is bound by residues 93-94 (NK), Asn145, and 151-154 (GSSL). His158 functions as the Nucleophile in the catalytic mechanism. Residues Gln160, 273–275 (NST), Met280, and Lys284 each bind substrate.

This sequence belongs to the ATP adenylyltransferase family. Monomer. A divalent metal cation is required as a cofactor. Post-translationally, the N-terminus is blocked.

Its subcellular location is the cytoplasm. It is found in the nucleus. It carries out the reaction ADP + ATP + H(+) = P(1),P(4)-bis(5'-adenosyl) tetraphosphate + phosphate. It catalyses the reaction sulfate + ADP + H(+) = adenosine 5'-phosphosulfate + phosphate. Ap4A phosphorylase catalyzes the phosphorolytic degradation of bis(5'-adenosyl) tetraphosphate (Ap4A) into ADP and ATP. Can also use other Np4N' nucleotides (where N and N' stand for A,C,G or U) as substrates with equal efficiency. Cannot catalyze the reverse reaction. Additionally, this enzyme can also catalyze the phosphorolytic degradation of adenosine 5'-phosphosulfate (AMPS) into ADP and sulfate, the reversible exchange reaction between inorganic phosphate and the beta-phosphate of a nucleoside diphosphate (NDP), and the synthesis of Ap4A from AMPS plus ATP. This is Protein APA1 from Saccharomyces cerevisiae (strain ATCC 204508 / S288c) (Baker's yeast).